The following is a 221-amino-acid chain: Sentrin-specific protease 8 (221 aa).

At methionine 1 the chain carries N-acetylmethionine. The tract at residues 11 to 174 is protease; that stretch reads SLLRQSDVSL…MYVICNTEAL (164 aa). Residues histidine 102 and aspartate 119 contribute to the active site. Cysteine 163 acts as the Nucleophile in catalysis.

This sequence belongs to the peptidase C48 family.

Protease that catalyzes two essential functions in the NEDD8 pathway: processing of full-length NEDD8 to its mature form and deconjugation of NEDD8 from targeted proteins such as cullins or p53. In Mus musculus (Mouse), this protein is Sentrin-specific protease 8 (Senp8).